Consider the following 702-residue polypeptide: Polyribonucleotide nucleotidyltransferase (702 aa).

Mg(2+) is bound by residues D485 and D491. One can recognise a KH domain in the interval 552–612 (PRTEIICIDP…EGVKKAISII (61 aa)). The region spanning 622–690 (GEIYLGKVTK…NQGRINLSRK (69 aa)) is the S1 motif domain.

It belongs to the polyribonucleotide nucleotidyltransferase family. Mg(2+) serves as cofactor.

It is found in the cytoplasm. It catalyses the reaction RNA(n+1) + phosphate = RNA(n) + a ribonucleoside 5'-diphosphate. Involved in mRNA degradation. Catalyzes the phosphorolysis of single-stranded polyribonucleotides processively in the 3'- to 5'-direction. This is Polyribonucleotide nucleotidyltransferase from Clostridium botulinum (strain ATCC 19397 / Type A).